Reading from the N-terminus, the 181-residue chain is Putative adenylate kinase (181 aa).

ATP contacts are provided by glycine 10, glycine 12, lysine 13, serine 14, and threonine 15. Residues 35-58 (NITEVVSKNGLYLEKDIEMDSYVV) form an NMP region. An LID region spans residues 106-116 (SRNYSSEKVKE). The ATP site is built by arginine 107 and lysine 147.

This sequence belongs to the adenylate kinase family. AK6 subfamily. Interacts with uS11. Not a structural component of 40S pre-ribosomes, but transiently interacts with them by binding to uS11.

It catalyses the reaction AMP + ATP = 2 ADP. The enzyme catalyses ATP + H2O = ADP + phosphate + H(+). Functionally, broad-specificity nucleoside monophosphate (NMP) kinase that catalyzes the reversible transfer of the terminal phosphate group between nucleoside triphosphates and monophosphates. Also has ATPase activity. Involved in the late maturation steps of the 30S ribosomal particles, specifically 16S rRNA maturation. While NMP activity is not required for ribosome maturation, ATPase activity is. Associates transiently with small ribosomal subunit protein uS11. ATP hydrolysis breaks the interaction with uS11. May temporarily remove uS11 from the ribosome to enable a conformational change of the ribosomal RNA that is needed for the final maturation step of the small ribosomal subunit. The polypeptide is Putative adenylate kinase (Methanococcus maripaludis (strain C7 / ATCC BAA-1331)).